The chain runs to 557 residues: D-arabinono-1,4-lactone oxidase (557 aa).

One can recognise an FAD-binding PCMH-type domain in the interval Phe25–Lys209. Residues Val58 to Gly61, His62 to Ser63, Ile144 to Thr148, Ile199, and Leu543 to Lys546 contribute to the FAD site. His62 is subject to Pros-8alpha-FAD histidine.

Belongs to the oxygen-dependent FAD-linked oxidoreductase family. FAD serves as cofactor.

The enzyme catalyses D-arabinono-1,4-lactone + O2 = dehydro-D-arabinono-1,4-lactone + H2O2 + H(+). It catalyses the reaction L-galactono-1,4-lactone + O2 = L-ascorbate + H2O2 + H(+). It carries out the reaction L-gulono-1,4-lactone + O2 = L-ascorbate + H2O2 + H(+). The catalysed reaction is L-xylono-1,4-lactone + O2 = dehydro-L-arabinono-1,4-lactone + H2O2 + H(+). It participates in cofactor biosynthesis; D-erythroascorbate biosynthesis; dehydro-D-arabinono-1,4-lactone from D-arabinose: step 2/2. Its function is as follows. D-arabinono-1,4-lactone oxidase that catalyzes the final step of biosynthesis of D-erythroascorbic acid, an important antioxidant and one of the virulence factors enhancing the pathogenicity. Is also able to oxidize L-galactono-1,4-lactone, L-xylono-1,4-lactone and L-gulono-1,4-lactone. The chain is D-arabinono-1,4-lactone oxidase from Candida albicans (strain SC5314 / ATCC MYA-2876) (Yeast).